The chain runs to 160 residues: Ribosomal RNA large subunit methyltransferase H (160 aa).

The S-adenosyl-L-methionine site is built by Leu-76 and Gly-108.

Belongs to the RNA methyltransferase RlmH family. Homodimer.

Its subcellular location is the cytoplasm. It carries out the reaction pseudouridine(1915) in 23S rRNA + S-adenosyl-L-methionine = N(3)-methylpseudouridine(1915) in 23S rRNA + S-adenosyl-L-homocysteine + H(+). Functionally, specifically methylates the pseudouridine at position 1915 (m3Psi1915) in 23S rRNA. The sequence is that of Ribosomal RNA large subunit methyltransferase H from Nitrobacter hamburgensis (strain DSM 10229 / NCIMB 13809 / X14).